We begin with the raw amino-acid sequence, 66 residues long: Large ribosomal subunit protein bL35 (66 aa).

Residues 1–16 (MPKQKTHRASAKRFKR) show a composition bias toward basic residues. The segment at 1–20 (MPKQKTHRASAKRFKRTGNG) is disordered.

It belongs to the bacterial ribosomal protein bL35 family.

The polypeptide is Large ribosomal subunit protein bL35 (Lactococcus lactis subsp. lactis (strain IL1403) (Streptococcus lactis)).